The sequence spans 383 residues: Transposase InsI for insertion sequence element IS30A (383 aa).

The region spanning 213-379 (VNGTPIHERS…TPKEIIERGV (167 aa)) is the Integrase catalytic domain.

This sequence belongs to the transposase IS30 family.

In terms of biological role, required for the transposition of the insertion element. The chain is Transposase InsI for insertion sequence element IS30A (insI1) from Escherichia coli (strain K12).